A 291-amino-acid polypeptide reads, in one-letter code: uncharacterized protein (291 aa).

2 disordered regions span residues 29–50 and 168–291; these read SEKP…LRDS and RKVK…AELK. The residue at position 50 (Ser-50) is a Phosphoserine. Polar residues-rich tracts occupy residues 176-186 and 205-217; these read NSKNPSKTGTP and QKNS…SKLI. Basic and acidic residues predominate over residues 221–237; it reads YKDEWLQQQKAEADRRT. Over residues 280 to 291 the composition is skewed to polar residues; it reads SSPSESTPAELK.

This is an uncharacterized protein from Mus musculus (Mouse).